The sequence spans 111 residues: Phosphoribosyl-ATP pyrophosphatase (111 aa).

The protein belongs to the PRA-PH family.

The protein resides in the cytoplasm. The enzyme catalyses 1-(5-phospho-beta-D-ribosyl)-ATP + H2O = 1-(5-phospho-beta-D-ribosyl)-5'-AMP + diphosphate + H(+). The protein operates within amino-acid biosynthesis; L-histidine biosynthesis; L-histidine from 5-phospho-alpha-D-ribose 1-diphosphate: step 2/9. The sequence is that of Phosphoribosyl-ATP pyrophosphatase from Pseudomonas paraeruginosa (strain DSM 24068 / PA7) (Pseudomonas aeruginosa (strain PA7)).